A 132-amino-acid polypeptide reads, in one-letter code: uncharacterized protein (132 aa).

Positions His-39 to Thr-93 are disordered. A compositionally biased stretch (basic and acidic residues) spans Leu-56 to Gly-72.

This is an uncharacterized protein from Homo sapiens (Human).